Here is a 137-residue protein sequence, read N- to C-terminus: Small ribosomal subunit protein uS12 (137 aa).

Disordered stretches follow at residues 1 to 22 (MPTI…SKSP) and 37 to 57 (KNPS…TPKK). Positions 9 to 19 (RKGRKSHKGKS) are enriched in basic residues. D102 is modified (3-methylthioaspartic acid).

It belongs to the universal ribosomal protein uS12 family. As to quaternary structure, part of the 30S ribosomal subunit. Contacts proteins S8 and S17. May interact with IF1 in the 30S initiation complex.

In terms of biological role, with S4 and S5 plays an important role in translational accuracy. Its function is as follows. Interacts with and stabilizes bases of the 16S rRNA that are involved in tRNA selection in the A site and with the mRNA backbone. Located at the interface of the 30S and 50S subunits, it traverses the body of the 30S subunit contacting proteins on the other side and probably holding the rRNA structure together. The combined cluster of proteins S8, S12 and S17 appears to hold together the shoulder and platform of the 30S subunit. This chain is Small ribosomal subunit protein uS12, found in Limosilactobacillus fermentum (strain NBRC 3956 / LMG 18251) (Lactobacillus fermentum).